A 180-amino-acid polypeptide reads, in one-letter code: Insulin-like growth factor 2 (180 aa).

Positions 1 to 24 (MGIPVGKSMLVLLISLAFALCCIA) are cleaved as a signal peptide. The interval 25–52 (AYRPSETLCGGELVDTLQFVCSDRGFYF) is b. 3 cysteine pairs are disulfide-bonded: cysteine 33–cysteine 71, cysteine 45–cysteine 84, and cysteine 70–cysteine 75. The segment at 53 to 64 (SRPSSRANRRSR) is c. The a stretch occupies residues 65 to 85 (GIVEECCFRSCDLALLETYCA). The tract at residues 86–91 (TPAKSE) is d. Positions 92–180 (RDVSTSQAVL…ASSEMSSNHQ (89 aa)) are cleaved as a propeptide — e peptide. The interval 160-180 (VLPPKDPAHGGASSEMSSNHQ) is disordered.

The protein belongs to the insulin family. In terms of assembly, interacts with MYORG; this interaction is required for IGF2 secretion. Interacts with integrins ITGAV:ITGB3 and ITGA6:ITGB4; integrin-binding is required for IGF2 signaling. Interacts with IGFBP2. Post-translationally, proteolytically processed by PCSK4, proIGF2 is cleaved at Arg-128 and Arg-92 to generate big-IGF2 and mature IGF2.

Its subcellular location is the secreted. Functionally, the insulin-like growth factors possess growth-promoting activity. Major fetal growth hormone in mammals. Plays a key role in regulating fetoplacental development. IGF2 is influenced by placental lactogen. Also involved in tissue differentiation. In adults, involved in glucose metabolism in adipose tissue, skeletal muscle and liver. Acts as a ligand for integrin which is required for IGF2 signaling. Positively regulates myogenic transcription factor MYOD1 function by facilitating the recruitment of transcriptional coactivators, thereby controlling muscle terminal differentiation. Inhibits myoblast differentiation and modulates metabolism via increasing the mitochondrial respiration rate. Its function is as follows. Preptin undergoes glucose-mediated co-secretion with insulin, and acts as a physiological amplifier of glucose-mediated insulin secretion. Exhibits osteogenic properties by increasing osteoblast mitogenic activity through phosphoactivation of MAPK1 and MAPK3. This is Insulin-like growth factor 2 from Rattus norvegicus (Rat).